Here is a 299-residue protein sequence, read N- to C-terminus: Ubiquinol-cytochrome c reductase complex assembly factor 1 (299 aa).

The protein belongs to the CBP3 family. In terms of assembly, interacts with UQCC2. Interacts with UQCC3. Forms a complex, named COMB/coordinator of mitochondrial CYTB biogenesis, composed of UQCC1, UQCC2, UQCC4, UQCC5 and UQCC6; stabilizes nascent cytochrome b/MT-CYB and promotes its membrane insertion. Forms a complex, named COMB/coordinator of mitochondrial CYTB biogenesis, composed of UQCC1, UQCC2, UQCC4, UQCC5 and UQCC6; stabilizes nascent cytochrome b/MT-CYB and promotes its membrane insertion. Forms a complex, named COMA, composed of UQCC1, UQCC2 and UQCC4; activates MT-CYB translation. Forms a complex, named COMC, composed of UQCC1, UQCC2; UQCC3 and UQCC4; mediates MT-CYB hemylation and association with the first nuclear-encoded CIII subunit UQCRQ.

It localises to the mitochondrion inner membrane. The protein localises to the cytoplasmic vesicle. In terms of biological role, required for the assembly of the ubiquinol-cytochrome c reductase complex (mitochondrial respiratory chain complex III or cytochrome b-c1 complex). Involved in cytochrome b translation and/or stability. The protein is Ubiquinol-cytochrome c reductase complex assembly factor 1 (UQCC1) of Homo sapiens (Human).